The chain runs to 440 residues: Tryptophan synthase beta chain 2 (440 aa).

An N6-(pyridoxal phosphate)lysine modification is found at lysine 110.

The protein belongs to the TrpB family. In terms of assembly, tetramer of two alpha and two beta chains. The cofactor is pyridoxal 5'-phosphate.

The catalysed reaction is (1S,2R)-1-C-(indol-3-yl)glycerol 3-phosphate + L-serine = D-glyceraldehyde 3-phosphate + L-tryptophan + H2O. Its pathway is amino-acid biosynthesis; L-tryptophan biosynthesis; L-tryptophan from chorismate: step 5/5. The beta subunit is responsible for the synthesis of L-tryptophan from indole and L-serine. In Pyrococcus abyssi (strain GE5 / Orsay), this protein is Tryptophan synthase beta chain 2 (trpB2).